We begin with the raw amino-acid sequence, 207 residues long: MEAMITKEFFESKTTIELARDILGMRLVHQTNEGLLSGLIVETEAYLGATDMAAHSFQNLRTKRTEVMFSSPGTIYMYQMHRQVLLNFITMPKGIPEAILIRAIEPDEQAKQQMTQNRHGKTGYELTNGPGKLTQALGLSMQDYGKTLFDSNIWLEEAKLPHLIEATNRIGVPNKGIATHYPLRFTVKGSPYISGQRKNSIRTGIWK.

It belongs to the DNA glycosylase MPG family.

The chain is Putative 3-methyladenine DNA glycosylase from Listeria monocytogenes serovar 1/2a (strain ATCC BAA-679 / EGD-e).